A 253-amino-acid chain; its full sequence is LexA repressor (253 aa).

The interval 1–34 (MAIEKKPAGARGSRGSRTVKTLPNGKPDPASLSD) is disordered. Positions 56–76 (IREIGDAAGLQSTSSVAYQLK) form a DNA-binding region, H-T-H motif. The segment covering 82–106 (GFLRRDPNKPRAVDVRHLPETESRS) has biased composition (basic and acidic residues). Residues 82–127 (GFLRRDPNKPRAVDVRHLPETESRSSKAATQAKSKAPQAGAHDPEL) are disordered. Residues 107 to 120 (SKAATQAKSKAPQA) show a composition bias toward low complexity. Residues Ser177 and Lys214 each act as for autocatalytic cleavage activity in the active site.

This sequence belongs to the peptidase S24 family. Homodimer.

It catalyses the reaction Hydrolysis of Ala-|-Gly bond in repressor LexA.. Its function is as follows. Represses a number of genes involved in the response to DNA damage (SOS response), including recA and lexA. In the presence of single-stranded DNA, RecA interacts with LexA causing an autocatalytic cleavage which disrupts the DNA-binding part of LexA, leading to derepression of the SOS regulon and eventually DNA repair. This is LexA repressor from Corynebacterium glutamicum (strain R).